The following is a 340-amino-acid chain: GTP 3',8-cyclase (340 aa).

A Radical SAM core domain is found at 8–227 (KLGRPIRDLR…EMIEQNFDIE (220 aa)). Residue R17 participates in GTP binding. Residues C24 and C28 each contribute to the [4Fe-4S] cluster site. Residue Y30 participates in S-adenosyl-L-methionine binding. C31 lines the [4Fe-4S] cluster pocket. R71 provides a ligand contact to GTP. G75 is an S-adenosyl-L-methionine binding site. A GTP-binding site is contributed by T102. S126 is an S-adenosyl-L-methionine binding site. A GTP-binding site is contributed by K163. Position 197 (M197) interacts with S-adenosyl-L-methionine. [4Fe-4S] cluster is bound by residues C261 and C264. 266-268 (RAR) provides a ligand contact to GTP. Residue C278 coordinates [4Fe-4S] cluster.

Belongs to the radical SAM superfamily. MoaA family. In terms of assembly, monomer and homodimer. The cofactor is [4Fe-4S] cluster.

It carries out the reaction GTP + AH2 + S-adenosyl-L-methionine = (8S)-3',8-cyclo-7,8-dihydroguanosine 5'-triphosphate + 5'-deoxyadenosine + L-methionine + A + H(+). It functions in the pathway cofactor biosynthesis; molybdopterin biosynthesis. Catalyzes the cyclization of GTP to (8S)-3',8-cyclo-7,8-dihydroguanosine 5'-triphosphate. This chain is GTP 3',8-cyclase, found in Staphylococcus saprophyticus subsp. saprophyticus (strain ATCC 15305 / DSM 20229 / NCIMB 8711 / NCTC 7292 / S-41).